Here is a 277-residue protein sequence, read N- to C-terminus: Co-chaperone protein DjlA (277 aa).

At 1-6 the chain is on the periplasmic side; the sequence is MRYWGK. A helical membrane pass occupies residues 7-31; the sequence is LLGLVLGVMYAPGVVGALLGLLVGH. The Cytoplasmic segment spans residues 32–277; that stretch reads MVDRALGAKR…DLIKREKGFK (246 aa). A J domain is found at 211–277; the sequence is DACKVLGVNS…DLIKREKGFK (67 aa).

As to quaternary structure, homodimer.

The protein resides in the cell inner membrane. Functionally, regulatory DnaK co-chaperone. Direct interaction between DnaK and DjlA is needed for the induction of the wcaABCDE operon, involved in the synthesis of a colanic acid polysaccharide capsule, possibly through activation of the RcsB/RcsC phosphotransfer signaling pathway. The colanic acid capsule may help the bacterium survive conditions outside the host. The protein is Co-chaperone protein DjlA of Yersinia pseudotuberculosis serotype I (strain IP32953).